A 177-amino-acid chain; its full sequence is NAD(P)H-quinone oxidoreductase subunit 6, chloroplastic (177 aa).

5 consecutive transmembrane segments (helical) span residues 10–30 (ILVVFLGLVLILGGLGVVLFT), 33–53 (IYSAFSLGLVLICVSLFYILL), 61–81 (AQLLIYVGAINVLILFAVMFM), 92–112 (LWTVGDGVTSLVCTSILFLLI), and 152–172 (FFLPFELISIILLVALIGAIS).

This sequence belongs to the complex I subunit 6 family. NDH is composed of at least 16 different subunits, 5 of which are encoded in the nucleus.

It is found in the plastid. The protein localises to the chloroplast thylakoid membrane. The enzyme catalyses a plastoquinone + NADH + (n+1) H(+)(in) = a plastoquinol + NAD(+) + n H(+)(out). The catalysed reaction is a plastoquinone + NADPH + (n+1) H(+)(in) = a plastoquinol + NADP(+) + n H(+)(out). Its function is as follows. NDH shuttles electrons from NAD(P)H:plastoquinone, via FMN and iron-sulfur (Fe-S) centers, to quinones in the photosynthetic chain and possibly in a chloroplast respiratory chain. The immediate electron acceptor for the enzyme in this species is believed to be plastoquinone. Couples the redox reaction to proton translocation, and thus conserves the redox energy in a proton gradient. The chain is NAD(P)H-quinone oxidoreductase subunit 6, chloroplastic (ndhG) from Lemna minor (Common duckweed).